The chain runs to 206 residues: Small ribosomal subunit protein uS4c (206 aa).

The S4 RNA-binding domain maps to 94–152 (MRLDNIVFRLGMAPTIPAARQLVNHRHILVNDFTVNIPSYSCKLGDKISVQKRFESKTN).

It belongs to the universal ribosomal protein uS4 family. As to quaternary structure, part of the 30S ribosomal subunit. Contacts protein S5. The interaction surface between S4 and S5 is involved in control of translational fidelity.

Its subcellular location is the plastid. The protein resides in the chloroplast. Its function is as follows. One of the primary rRNA binding proteins, it binds directly to 16S rRNA where it nucleates assembly of the body of the 30S subunit. With S5 and S12 plays an important role in translational accuracy. The sequence is that of Small ribosomal subunit protein uS4c (rps4) from Chara vulgaris (Common stonewort).